The primary structure comprises 94 residues: MMGLSLASAVLLASLLSLHLGTATRGSDISKTCCFQYSHKPLPWTWVRSYEFTSNSCSQRAVIFTTKRGKKVCTHPRKKWVQKYISLLKTPKQL.

A signal peptide spans 1–23 (MMGLSLASAVLLASLLSLHLGTA). Disulfide bonds link Cys-33-Cys-57 and Cys-34-Cys-73.

It belongs to the intercrine beta (chemokine CC) family. Monomer. As to expression, ubiquitously expressed at low levels in various tissues including heart and ovary.

Its subcellular location is the secreted. Chemoattractant for eosinophils and basophils. Acts as a ligand for C-C chemokine receptor CCR3 which triggers Ca(2+) mobilization in eosinophils. Also acts as a ligand for CX3C chemokine receptor CX3CR1, inducing cell chemotaxis. The polypeptide is C-C motif chemokine 26 (Homo sapiens (Human)).